Here is a 204-residue protein sequence, read N- to C-terminus: uncharacterized protein (204 aa).

Positions 77-111 (APHGSRIPGRCRRSPRCSRRPGGSRLRGGTWTPRL) are disordered. Residues 85-95 (GRCRRSPRCSR) show a composition bias toward basic residues. Residues 96–105 (RPGGSRLRGG) show a composition bias toward low complexity.

This is an uncharacterized protein from Homo sapiens (Human).